Consider the following 313-residue polypeptide: Small ribosomal subunit biogenesis GTPase RsgA (313 aa).

The 158-residue stretch at lysine 80 to phenylalanine 237 folds into the CP-type G domain. Residues asparagine 129 to aspartate 132 and glycine 180 to serine 188 each bind GTP. Positions 261, 266, 268, and 274 each coordinate Zn(2+).

The protein belongs to the TRAFAC class YlqF/YawG GTPase family. RsgA subfamily. In terms of assembly, monomer. Associates with 30S ribosomal subunit, binds 16S rRNA. Zn(2+) serves as cofactor.

The protein localises to the cytoplasm. In terms of biological role, one of several proteins that assist in the late maturation steps of the functional core of the 30S ribosomal subunit. Helps release RbfA from mature subunits. May play a role in the assembly of ribosomal proteins into the subunit. Circularly permuted GTPase that catalyzes slow GTP hydrolysis, GTPase activity is stimulated by the 30S ribosomal subunit. This is Small ribosomal subunit biogenesis GTPase RsgA from Borrelia recurrentis (strain A1).